Here is a 525-residue protein sequence, read N- to C-terminus: Histidine-rich glycoprotein (525 aa).

The first 18 residues, 1-18 (MKVLTTALLLVTLQCSHA), serve as a signal peptide directing secretion. The Cystatin 1 domain occupies 19-122 (LSPTNCDASK…ESQDLSVNGY (104 aa)). 5 cysteine pairs are disulfide-bonded: cysteine 24–cysteine 504, cysteine 78–cysteine 89, cysteine 103–cysteine 124, cysteine 201–cysteine 414, and cysteine 216–cysteine 239. Residues 41-84 (GRRSGYTFQLLRVSDAHLDRVETATIYYLVLDVVESDCWVLSTK) form an interaction with ATP5F1A region. 2 N-linked (GlcNAc...) asparagine glycosylation sites follow: asparagine 112 and asparagine 123. Residues 135–240 (NTKDSPVLVD…TPEYTDLICE (106 aa)) form the Cystatin 2 domain. Serine 145 carries the post-translational modification Phosphoserine. Asparagine 200 carries an N-linked (GlcNAc...) asparagine glycan. The segment at 275–445 (RDHHHTHKTH…GHSRKRGPGK (171 aa)) is disordered. N-linked (GlcNAc...) asparagine glycans are attached at residues asparagine 322 and asparagine 330. Composition is skewed to basic residues over residues 339–392 (HGQH…HGHH) and 426–443 (QYHRGHGPPHGHSRKRGP). Residue serine 438 is modified to Phosphoserine.

In terms of assembly, interacts with THBS1 (via the TSP type I repeats); the interaction blocks the antiangiogenic effect of THBS1 with CD36. Interacts with HPSE; the interaction is enhanced at acidic pH, partially inhibits binding of HPSE to cell surface receptors and modulates its enzymatic activity. Interacts (via the HRR domain) with TMP1; the interaction partially mediates the antiangiogenic properties of HRG. Interacts with kappa and lambda light chains of IgG molecules. Interacts with ATP5F1A; the interaction occurs on the surface of T-cells and alters their cell morphology in concert with CONA. Binds IgG molecules containing kappa and lambda light chains and inhibits the formation of insoluble immunoglobulin complexes. Interacts with F12; the interaction, which is enhanced in the presence of zinc ions and inhibited by heparin-binding to HRG, inhibits factor XII autoactivation and contact-initiated coagulation. Interacts with PLG (via its Kringle domains); the interaction tethers PLG to the cell surface and enhances its activation. Interacts (via the HRR domain) with TPM1; the interaction appears to contribute to the antiangiogenic properties of the HRR domain. Interacts with THBS2; the interaction blocks the antiangiogenic effect of THBS2 with CD36. N-glycosylated. Post-translationally, proteolytic cleavage produces several HRG fragments which are mostly disulfide-linked and, therefore, not released. Cleavage by plasmin is inhibited in the presence of heparin, zinc ions or in an acidic environment. Cleavage reduces binding of HRG to heparan sulfate, but enhances the ability of HRG to bind and tether plasminogen to the cell surface. On platelet activation, releases a 33 kDa antiangiogenic peptide which encompasses the HRR. Also cleaved in the C-terminal by plasmin. Expressed in liver, blood plasma, serum and in platelets. Also present in fibrin clots, wound fluid from acute wounds and chronic leg ulcers.

It localises to the secreted. Plasma glycoprotein that binds a number of ligands such as heme, heparin, heparan sulfate, thrombospondin, plasminogen, and divalent metal ions. Inhibits rosette formation. Acts as an adapter protein and implicated in regulating many processes such as immune complex and pathogen clearance, cell adhesion, angiogenesis, coagulation and fibrinolysis. Mediates clearance of necrotic cells through enhancing the phagocytosis of necrotic cells in a heparan sulfate-dependent pathway. This process can be regulated by the presence of certain HRG ligands such as heparin and zinc ions. Binds to IgG subclasses of immunoglobins containing kappa and lambda light chains with different affinities regulating their clearance and inhibiting the formation of insoluble immune complexes. Tethers plasminogen to the cell surface. Binds T-cells and alters the cell morphology. Modulates angiogenesis by blocking the CD6-mediated antiangiongenic effect of thrombospondins, THBS1 and THBS2. In Rattus norvegicus (Rat), this protein is Histidine-rich glycoprotein (Hrg).